The primary structure comprises 904 residues: Shieldin complex subunit 2 (904 aa).

Residues 1–60 (MSGGSQVHIFWGAPVAPLKMTVSQDTASLMSVADPWKKIHLLYSQHSLYLKDEKQHKNLE) form a sufficient for interaction with SHLD3 and MAD2L2 region. Residues 1–568 (MSGGSQVHIF…AYVSSKHSYL (568 aa)) are interaction with ASTE1. Residues 721–891 (KCSGVVLIQA…LQQDFSLLDF (171 aa)) are mediates interaction with SHLD1.

It belongs to the SHLD2 family. In terms of assembly, component of the shieldin complex, consisting of SHLD1, SHLD2, SHLD3 and MAD2L2/REV7. Within the complex, SHLD2 forms a scaffold which interacts with a SHLD3-MAD2L2 subcomplex via its N-terminus, and with SHLD1 via its C-terminus. Interacts with TP53BP1. Interacts with RIF1. Interacts with ASTE1.

Its subcellular location is the chromosome. Functionally, component of the shieldin complex, which plays an important role in repair of DNA double-stranded breaks (DSBs). During G1 and S phase of the cell cycle, the complex functions downstream of TP53BP1 to promote non-homologous end joining (NHEJ) and suppress DNA end resection. Mediates various NHEJ-dependent processes including immunoglobulin class-switch recombination, and fusion of unprotected telomeres. This is Shieldin complex subunit 2 from Pongo abelii (Sumatran orangutan).